A 259-amino-acid chain; its full sequence is Deoxyribose-phosphate aldolase (259 aa).

D101 functions as the Proton donor/acceptor in the catalytic mechanism. K166 acts as the Schiff-base intermediate with acetaldehyde in catalysis. Catalysis depends on K200, which acts as the Proton donor/acceptor.

It belongs to the DeoC/FbaB aldolase family. DeoC type 2 subfamily.

It is found in the cytoplasm. It catalyses the reaction 2-deoxy-D-ribose 5-phosphate = D-glyceraldehyde 3-phosphate + acetaldehyde. It functions in the pathway carbohydrate degradation; 2-deoxy-D-ribose 1-phosphate degradation; D-glyceraldehyde 3-phosphate and acetaldehyde from 2-deoxy-alpha-D-ribose 1-phosphate: step 2/2. Its function is as follows. Catalyzes a reversible aldol reaction between acetaldehyde and D-glyceraldehyde 3-phosphate to generate 2-deoxy-D-ribose 5-phosphate. This Glaesserella parasuis serovar 5 (strain SH0165) (Haemophilus parasuis) protein is Deoxyribose-phosphate aldolase.